A 205-amino-acid polypeptide reads, in one-letter code: COP9 signalosome complex subunit 7 (205 aa).

In terms of domain architecture, PCI spans 1–135 (MEEKISQAID…QTLHVSWALE (135 aa)). Position 183 is a phosphoserine (Ser-183).

This sequence belongs to the CSN7/EIF3M family. CSN7 subfamily. As to quaternary structure, component of the COP9 signalosome (CSN) complex.

In terms of biological role, component of the COP9 signalosome (CSN) complex that acts as an regulator of the ubiquitin (Ubl) conjugation pathway by mediating the deneddylation of the cullin subunit of SCF-type E3 ubiquitin-protein ligase complexes. The protein is COP9 signalosome complex subunit 7 (csn71) of Schizosaccharomyces pombe (strain 972 / ATCC 24843) (Fission yeast).